The following is an 82-amino-acid chain: Large ribosomal subunit protein bL27 (82 aa).

The tract at residues 1-54 (MAHKKGQGASRNGRDSESKRLGMKVGAGQRVSTGSILVRQRGTKWHPSQNVGRG) is disordered.

It belongs to the bacterial ribosomal protein bL27 family.

The polypeptide is Large ribosomal subunit protein bL27 (Chlamydia caviae (strain ATCC VR-813 / DSM 19441 / 03DC25 / GPIC) (Chlamydophila caviae)).